The following is a 442-amino-acid chain: tRNA-2-methylthio-N(6)-dimethylallyladenosine synthase (442 aa).

The 116-residue stretch at 2-117 (QGLYIKSYGC…LPELIIKARR (116 aa)) folds into the MTTase N-terminal domain. Cys11, Cys47, Cys80, Cys157, Cys161, and Cys164 together coordinate [4Fe-4S] cluster. Residues 143-374 (KNQEVSAFIS…QELLREQQLA (232 aa)) enclose the Radical SAM core domain. The TRAM domain occupies 377 to 442 (RNMIGQTCSV…QNSVTGIVVN (66 aa)).

This sequence belongs to the methylthiotransferase family. MiaB subfamily. Monomer. It depends on [4Fe-4S] cluster as a cofactor.

The protein resides in the cytoplasm. It catalyses the reaction N(6)-dimethylallyladenosine(37) in tRNA + (sulfur carrier)-SH + AH2 + 2 S-adenosyl-L-methionine = 2-methylsulfanyl-N(6)-dimethylallyladenosine(37) in tRNA + (sulfur carrier)-H + 5'-deoxyadenosine + L-methionine + A + S-adenosyl-L-homocysteine + 2 H(+). In terms of biological role, catalyzes the methylthiolation of N6-(dimethylallyl)adenosine (i(6)A), leading to the formation of 2-methylthio-N6-(dimethylallyl)adenosine (ms(2)i(6)A) at position 37 in tRNAs that read codons beginning with uridine. This Ehrlichia chaffeensis (strain ATCC CRL-10679 / Arkansas) protein is tRNA-2-methylthio-N(6)-dimethylallyladenosine synthase.